Reading from the N-terminus, the 264-residue chain is tRNA (guanine-N(7)-)-methyltransferase (264 aa).

The disordered stretch occupies residues 1-39 (MIHDDDPNAPGAPHDDATAAPASATRAAPAAGDDDDANP). The segment covering 18–31 (TAAPASATRAAPAA) has biased composition (low complexity). Residues E94, E119, D146, and D169 each contribute to the S-adenosyl-L-methionine site. D169 is an active-site residue. Substrate is bound by residues K173, D205, and 240–243 (TKFE).

Belongs to the class I-like SAM-binding methyltransferase superfamily. TrmB family.

The catalysed reaction is guanosine(46) in tRNA + S-adenosyl-L-methionine = N(7)-methylguanosine(46) in tRNA + S-adenosyl-L-homocysteine. It participates in tRNA modification; N(7)-methylguanine-tRNA biosynthesis. Catalyzes the formation of N(7)-methylguanine at position 46 (m7G46) in tRNA. The sequence is that of tRNA (guanine-N(7)-)-methyltransferase from Burkholderia mallei (strain ATCC 23344).